The sequence spans 123 residues: Large ribosomal subunit protein uL14 (123 aa).

Belongs to the universal ribosomal protein uL14 family. Part of the 50S ribosomal subunit. Forms a cluster with proteins L3 and L19. In the 70S ribosome, L14 and L19 interact and together make contacts with the 16S rRNA in bridges B5 and B8.

Binds to 23S rRNA. Forms part of two intersubunit bridges in the 70S ribosome. The sequence is that of Large ribosomal subunit protein uL14 from Escherichia coli O139:H28 (strain E24377A / ETEC).